The chain runs to 113 residues: Large ribosomal subunit protein P1 (113 aa).

The disordered stretch occupies residues 84 to 113; that stretch reads APAAAAKKETKKEEVKKEESDDDMGMGLFD. Residues 89–102 are compositionally biased toward basic and acidic residues; sequence AKKETKKEEVKKEE.

It belongs to the eukaryotic ribosomal protein P1/P2 family. In terms of assembly, P1 and P2 exist as dimers at the large ribosomal subunit.

In terms of biological role, plays an important role in the elongation step of protein synthesis. The polypeptide is Large ribosomal subunit protein P1 (rplp1) (Dictyostelium discoideum (Social amoeba)).